Consider the following 103-residue polypeptide: Large ribosomal subunit protein bL21 (103 aa).

Belongs to the bacterial ribosomal protein bL21 family. In terms of assembly, part of the 50S ribosomal subunit. Contacts protein L20.

Its function is as follows. This protein binds to 23S rRNA in the presence of protein L20. This Shewanella piezotolerans (strain WP3 / JCM 13877) protein is Large ribosomal subunit protein bL21.